Reading from the N-terminus, the 409-residue chain is Microfibrillar-associated protein 3-like (409 aa).

The N-terminal stretch at 1-28 is a signal peptide; the sequence is MDRLKSHLTVCFLPSVPFLILVSTLATA. At 29-149 the chain is on the extracellular side; sequence KSVTNSTLNG…LRVIFTSGDM (121 aa). Asparagine 33, asparagine 37, asparagine 67, asparagine 111, and asparagine 135 each carry an N-linked (GlcNAc...) asparagine glycan. One can recognise an Ig-like C2-type domain in the interval 47 to 141; it reads PVIIARTDHI…GTVNNTVTLR (95 aa). Cysteine 68 and cysteine 125 are disulfide-bonded. The chain crosses the membrane as a helical span at residues 150–172; it reads GVYYMVVCLVAFTIVMVLNITRL. At 173-409 the chain is on the cytoplasmic side; it reads CMMSSHLKKT…NTCIIYESHV (237 aa). At tyrosine 287 the chain carries Phosphotyrosine; by EGFR. Disordered regions lie at residues 292-311 and 320-385; these read SLKR…LHEQ and SVHP…VLPP. 4 positions are modified to phosphoserine: serine 298, serine 303, serine 306, and serine 307. Basic and acidic residues predominate over residues 339-355; it reads EVKDVEETELSAEHSPE. The span at 363-377 shows a compositional bias: low complexity; it reads VTSTELTSEEPTPVE.

Highly expressed in testis.

Its subcellular location is the cell membrane. The protein resides in the nucleus. It is found in the cytoplasm. Functionally, may participate in the nuclear signaling of EGFR and MAPK1/ERK2. May a have a role in metastasis. The protein is Microfibrillar-associated protein 3-like (MFAP3L) of Homo sapiens (Human).